We begin with the raw amino-acid sequence, 272 residues long: Shikimate dehydrogenase (NADP(+)) (272 aa).

Residues 14 to 16 (SKS) and Thr-61 contribute to the shikimate site. The Proton acceptor role is filled by Lys-65. Glu-77 lines the NADP(+) pocket. Residues Asn-86 and Asp-102 each contribute to the shikimate site. Residues 126–130 (GAGGA), 149–154 (NRTVSR), and Met-213 each bind NADP(+). Residue Tyr-215 participates in shikimate binding. Gly-237 contributes to the NADP(+) binding site.

It belongs to the shikimate dehydrogenase family. As to quaternary structure, homodimer.

It carries out the reaction shikimate + NADP(+) = 3-dehydroshikimate + NADPH + H(+). Its pathway is metabolic intermediate biosynthesis; chorismate biosynthesis; chorismate from D-erythrose 4-phosphate and phosphoenolpyruvate: step 4/7. Its function is as follows. Involved in the biosynthesis of the chorismate, which leads to the biosynthesis of aromatic amino acids. Catalyzes the reversible NADPH linked reduction of 3-dehydroshikimate (DHSA) to yield shikimate (SA). This chain is Shikimate dehydrogenase (NADP(+)), found in Shigella boydii serotype 4 (strain Sb227).